The primary structure comprises 565 residues: NAD-dependent malic enzyme (565 aa).

The active-site Proton donor is the tyrosine 104. Arginine 157 is a binding site for NAD(+). The active-site Proton acceptor is the lysine 175. A divalent metal cation contacts are provided by glutamate 246, aspartate 247, and aspartate 270. Residues aspartate 270 and asparagine 418 each coordinate NAD(+).

This sequence belongs to the malic enzymes family. As to quaternary structure, homotetramer. Mg(2+) serves as cofactor. Requires Mn(2+) as cofactor.

It carries out the reaction (S)-malate + NAD(+) = pyruvate + CO2 + NADH. It catalyses the reaction oxaloacetate + H(+) = pyruvate + CO2. This Shigella flexneri serotype 5b (strain 8401) protein is NAD-dependent malic enzyme.